An 817-amino-acid polypeptide reads, in one-letter code: Disks large homolog 3 (817 aa).

An N-acetylmethionine mark is found at Met1 and His2. Residues Trp33–Ser101 are disordered. The span at Gly40 to Gly53 shows a compositional bias: gly residues. Residues Gln57 to Pro69 are compositionally biased toward polar residues. PDZ domains follow at residues Glu130–Arg217, Glu226–Lys311, and Asp379–Tyr465. At Ser139 the chain carries Phosphoserine. Residues Lys501–Glu571 enclose the SH3 domain. One can recognise a Guanylate kinase-like domain in the interval Ala627–Glu802. Position 673 is a phosphotyrosine (Tyr673).

The protein belongs to the MAGUK family. In terms of assembly, interacts through its PDZ domains with NETO1, GRIN2B and SYNGAP1. Interacts through its guanylate kinase-like domain with DLGAP1, DLGAP2, DLGAP3 and DLGAP4. Interacts with FLTP/C1orf192. Interacts through its PDZ domains with APC. Interacts through its first two PDZ domains with ERBB4. Interacts through its third PDZ domain with NLGN1, and probably with NLGN2 and NLGN3. Interacts with FRMPD4 (via C-terminus). Interacts with LRFN1, LRFN2 and LRFN4. Interacts with DGKI (via PDZ-binding motif).

Required for learning most likely through its role in synaptic plasticity following NMDA receptor signaling. This is Disks large homolog 3 (DLG3) from Homo sapiens (Human).